A 468-amino-acid polypeptide reads, in one-letter code: ATP synthase subunit beta (468 aa).

Residue 155 to 162 (GGAGVGKT) coordinates ATP.

It belongs to the ATPase alpha/beta chains family. F-type ATPases have 2 components, CF(1) - the catalytic core - and CF(0) - the membrane proton channel. CF(1) has five subunits: alpha(3), beta(3), gamma(1), delta(1), epsilon(1). CF(0) has three main subunits: a(1), b(2) and c(9-12). The alpha and beta chains form an alternating ring which encloses part of the gamma chain. CF(1) is attached to CF(0) by a central stalk formed by the gamma and epsilon chains, while a peripheral stalk is formed by the delta and b chains.

Its subcellular location is the cell membrane. It catalyses the reaction ATP + H2O + 4 H(+)(in) = ADP + phosphate + 5 H(+)(out). In terms of biological role, produces ATP from ADP in the presence of a proton gradient across the membrane. The catalytic sites are hosted primarily by the beta subunits. The protein is ATP synthase subunit beta of Enterococcus hirae (strain ATCC 9790 / DSM 20160 / JCM 8729 / LMG 6399 / NBRC 3181 / NCIMB 6459 / NCDO 1258 / NCTC 12367 / WDCM 00089 / R).